The primary structure comprises 140 residues: uncharacterized protein (140 aa).

Residue 18 to 25 participates in ATP binding; sequence GTNGSGKS.

This is an uncharacterized protein from Haemophilus influenzae (strain ATCC 51907 / DSM 11121 / KW20 / Rd).